A 78-amino-acid polypeptide reads, in one-letter code: Large ribosomal subunit protein bL28 (78 aa).

The interval 1-25 (MSRVCQVTGKRPAVGNNRSHAKNAT) is disordered.

This sequence belongs to the bacterial ribosomal protein bL28 family.

This chain is Large ribosomal subunit protein bL28, found in Aliivibrio fischeri (strain ATCC 700601 / ES114) (Vibrio fischeri).